We begin with the raw amino-acid sequence, 504 residues long: Topoisomerase I damage affected protein 11 (504 aa).

The disordered stretch occupies residues 32-62 (RKTGRKIRSASSNGYRLEHHRTSSAGSMHSQ). The stretch at 179-231 (ALLQSLATKELELLECKQKIEDLKKQTQHEEQNYTRRARELHELKEQVSKHLD) forms a coiled coil. Thr-236 carries the post-translational modification Phosphothreonine. A phosphoserine mark is found at Ser-244 and Ser-286. Disordered regions lie at residues 252-306 (LESR…SKQS), 332-377 (WDDS…SVSR), and 400-504 (DVIT…MTDF). Over residues 257–287 (ENAGNSSLPSSVSKPKNMGHQSTNQSRSVSP) the composition is skewed to polar residues. Over residues 290-301 (IQERRQRDDSSD) the composition is skewed to basic and acidic residues. 2 stretches are compositionally biased toward polar residues: residues 332–359 (WDDS…QQYD) and 368–377 (KSPSQGSVSR). Residues 403–421 (TDNRCDPVYKSDRQHEQKK) show a composition bias toward basic and acidic residues. A compositionally biased stretch (basic residues) spans 470 to 479 (TREKKSKRSS). A compositionally biased stretch (polar residues) spans 491–504 (DNSSVKNSVEMTDF).

It belongs to the TDA11 family.

It is found in the cytoplasm. This chain is Topoisomerase I damage affected protein 11 (TDA11), found in Saccharomyces cerevisiae (strain Lalvin EC1118 / Prise de mousse) (Baker's yeast).